Here is a 369-residue protein sequence, read N- to C-terminus: MSGNTLGKLFTVTTFGESHGPALGCIVDGCPPGLALCETDIQIDLDRRRPGKSRHTTQRREPDQVQILSGVFEGKTTGTPIGLLIENVDQRSRDYDKIKEQIRPGHADYTYLQKYGLRDYRGGGRSSARETAMRVAAGAIAKKYLAERHGVKIRGYLAQLGPIRAERFDWEIVEKNPFFCPDPDKISELEAYMDALRKEGDSIGARINVVATGVPPGLGEPVFDRLDADLAHALMSINAVKGVEIGVGFAAVTQKGTDHRDPLTPEGFLSNHAGGVLGGISTGQDILASIALKPTSSLRLPERTINCRGESAEVVTTGRHDPCVGIRATPIAEAMAALVLMDHLLRHRAQNMDVQPSLPSIPAYPGGGG.

Positions 48 and 54 each coordinate NADP(+). FMN-binding positions include 125–127, 238–239, G278, 293–297, and R319; these read RSS, NA, and KPTSS.

The protein belongs to the chorismate synthase family. As to quaternary structure, homotetramer. FMNH2 serves as cofactor.

It catalyses the reaction 5-O-(1-carboxyvinyl)-3-phosphoshikimate = chorismate + phosphate. It participates in metabolic intermediate biosynthesis; chorismate biosynthesis; chorismate from D-erythrose 4-phosphate and phosphoenolpyruvate: step 7/7. Its function is as follows. Catalyzes the anti-1,4-elimination of the C-3 phosphate and the C-6 proR hydrogen from 5-enolpyruvylshikimate-3-phosphate (EPSP) to yield chorismate, which is the branch point compound that serves as the starting substrate for the three terminal pathways of aromatic amino acid biosynthesis. This reaction introduces a second double bond into the aromatic ring system. This Nitrosococcus oceani (strain ATCC 19707 / BCRC 17464 / JCM 30415 / NCIMB 11848 / C-107) protein is Chorismate synthase.